Consider the following 255-residue polypeptide: Imidazole glycerol phosphate synthase subunit HisF (255 aa).

Active-site residues include aspartate 11 and aspartate 130.

The protein belongs to the HisA/HisF family. As to quaternary structure, heterodimer of HisH and HisF.

The protein localises to the cytoplasm. The catalysed reaction is 5-[(5-phospho-1-deoxy-D-ribulos-1-ylimino)methylamino]-1-(5-phospho-beta-D-ribosyl)imidazole-4-carboxamide + L-glutamine = D-erythro-1-(imidazol-4-yl)glycerol 3-phosphate + 5-amino-1-(5-phospho-beta-D-ribosyl)imidazole-4-carboxamide + L-glutamate + H(+). It participates in amino-acid biosynthesis; L-histidine biosynthesis; L-histidine from 5-phospho-alpha-D-ribose 1-diphosphate: step 5/9. In terms of biological role, IGPS catalyzes the conversion of PRFAR and glutamine to IGP, AICAR and glutamate. The HisF subunit catalyzes the cyclization activity that produces IGP and AICAR from PRFAR using the ammonia provided by the HisH subunit. The sequence is that of Imidazole glycerol phosphate synthase subunit HisF from Campylobacter jejuni (strain RM1221).